The primary structure comprises 238 residues: CASP-like protein 2BC2 (238 aa).

The Cytoplasmic portion of the chain corresponds to 1–66; the sequence is MPSSTYPRRR…FHQKVAVEKR (66 aa). Residues 67-87 form a helical membrane-spanning segment; the sequence is LKIGEVILRFAMIALALVAAV. Residues 88–111 lie on the Extracellular side of the membrane; sequence RVGTDTQTRTIFTIEKKAKYSDMK. Residues 112-132 traverse the membrane as a helical segment; the sequence is ALVFLVVMNGIVASYSLLQGL. Residues 133–148 lie on the Cytoplasmic side of the membrane; that stretch reads RCVLSIYTQSPLTSKP. The chain crosses the membrane as a helical span at residues 149–169; the sequence is LAWLIFALDQTMAYFSLAAAA. Residues 170 to 200 are Extracellular-facing; the sequence is AAAESAYLAERGQTEFQWMKVCIFYEKFCHQ. The helical transmembrane segment at 201–221 threads the bilayer; the sequence is IGEGLVSTFLVSLSMATVSGM. Residues 222 to 238 are Cytoplasmic-facing; sequence SAYHLFRLYGSKGKSIQ.

The protein belongs to the Casparian strip membrane proteins (CASP) family. Homodimer and heterodimers.

The protein resides in the cell membrane. In Picea sitchensis (Sitka spruce), this protein is CASP-like protein 2BC2.